We begin with the raw amino-acid sequence, 616 residues long: Dihydroxy-acid dehydratase (616 aa).

D81 is a Mg(2+) binding site. [2Fe-2S] cluster is bound at residue C122. Mg(2+)-binding residues include D123 and K124. Position 124 is an N6-carboxylysine (K124). C195 is a binding site for [2Fe-2S] cluster. A Mg(2+)-binding site is contributed by E491. Catalysis depends on S517, which acts as the Proton acceptor.

The protein belongs to the IlvD/Edd family. Homodimer. [2Fe-2S] cluster is required as a cofactor. The cofactor is Mg(2+).

It carries out the reaction (2R)-2,3-dihydroxy-3-methylbutanoate = 3-methyl-2-oxobutanoate + H2O. The enzyme catalyses (2R,3R)-2,3-dihydroxy-3-methylpentanoate = (S)-3-methyl-2-oxopentanoate + H2O. It functions in the pathway amino-acid biosynthesis; L-isoleucine biosynthesis; L-isoleucine from 2-oxobutanoate: step 3/4. It participates in amino-acid biosynthesis; L-valine biosynthesis; L-valine from pyruvate: step 3/4. Functionally, functions in the biosynthesis of branched-chain amino acids. Catalyzes the dehydration of (2R,3R)-2,3-dihydroxy-3-methylpentanoate (2,3-dihydroxy-3-methylvalerate) into 2-oxo-3-methylpentanoate (2-oxo-3-methylvalerate) and of (2R)-2,3-dihydroxy-3-methylbutanoate (2,3-dihydroxyisovalerate) into 2-oxo-3-methylbutanoate (2-oxoisovalerate), the penultimate precursor to L-isoleucine and L-valine, respectively. The polypeptide is Dihydroxy-acid dehydratase (Salmonella typhi).